The chain runs to 475 residues: Putative F-box protein At1g46840 (475 aa).

The 47-residue stretch at 25–71 (TYVLEKLHIDLVIEILSRLSAKSIAICRCVSKQWNSLLVSQDFVESF) folds into the F-box domain. A compositionally biased stretch (low complexity) spans 423 to 433 (SSYSTTRSYKS). The segment at 423-475 (SSYSTTRSYKSSGKRCSDRSIGEDEQDDIGEKRGDQAAERRERSTKRGKHEVH) is disordered. The segment covering 451 to 464 (IGEKRGDQAAERRE) has biased composition (basic and acidic residues). Residues 465–475 (RSTKRGKHEVH) are compositionally biased toward basic residues.

The polypeptide is Putative F-box protein At1g46840 (Arabidopsis thaliana (Mouse-ear cress)).